The primary structure comprises 1256 residues: GPI inositol-deacylase (1256 aa).

A compositionally biased stretch (polar residues) spans 37–48; that stretch reads DVYANSTTNATA. A disordered region spans residues 37–203; the sequence is DVYANSTTNA…MEKEEEQKFV (167 aa). Asparagine 41 and asparagine 45 each carry an N-linked (GlcNAc...) asparagine glycan. Positions 59–68 are enriched in low complexity; that stretch reads PRPSRPSQSS. Residues 69–83 are compositionally biased toward polar residues; the sequence is AAERTSPESPSVRQS. Positions 107–135 are enriched in low complexity; it reads QSPSQQSQNQQQQQQQQQQQQQQQQQQQS. Positions 143–156 are enriched in polar residues; sequence SGNFNWKLSHSRNG. An N-linked (GlcNAc...) asparagine glycan is attached at asparagine 155. Low complexity predominate over residues 165-180; the sequence is FFSSSFSHSPSTPPLS. Basic and acidic residues predominate over residues 190–202; it reads HSKEMEKEEEQKF. The helical transmembrane segment at 214–234 threads the bilayer; sequence AITFVTLLISILGIGFLALVL. Residue asparagine 235 is glycosylated (N-linked (GlcNAc...) asparagine). Residue serine 397 is part of the active site. Asparagine 582 carries N-linked (GlcNAc...) asparagine glycosylation. Helical transmembrane passes span 882–902 and 929–949; these read LYMRYRTVFAAFPLLVVTLVL and SIPLVLAFLTFLSLFIWNSSS. An N-linked (GlcNAc...) asparagine glycan is attached at asparagine 960. The next 6 helical transmembrane spans lie at 980–1000, 1005–1025, 1053–1073, 1103–1123, 1130–1150, and 1172–1192; these read PFFWFLVPVIGLICVGICTVF, LTLVHILSTAVSLLSFRPGWI, ILLVLVSTLIPYQFAYLVCCL, SILLLMLWILPINLPILVVWI, WLTPFSSHHNVLSIMPFIILV, and VLLFGIALYAAIYGVSYAYML. N-linked (GlcNAc...) asparagine glycosylation is found at asparagine 1212, asparagine 1239, and asparagine 1242.

The protein belongs to the GPI inositol-deacylase family.

The protein resides in the endoplasmic reticulum membrane. Functionally, involved in inositol deacylation of GPI-anchored proteins which plays important roles in the quality control and ER-associated degradation of GPI-anchored proteins. This is GPI inositol-deacylase (bst-1) from Neurospora crassa (strain ATCC 24698 / 74-OR23-1A / CBS 708.71 / DSM 1257 / FGSC 987).